The following is a 498-amino-acid chain: NAD(P)H-quinone oxidoreductase chain 4, chloroplastic (498 aa).

14 consecutive transmembrane segments (helical) span residues 4–24, 37–57, 87–107, 111–131, 134–154, 167–187, 207–227, 242–262, 274–294, 305–325, 331–351, 386–406, 417–437, and 461–481; these read LPWL…IPLL, LGIC…QFHL, MGLI…AWPV, VRLF…LFAS, ILLF…LLSM, FLLY…TMGL, IAVE…KLPI, HYST…YGLI, FLFS…ASLI, IAYS…SITD, AILQ…LAGI, LALP…GIVT, IILF…LSML, and IFIS…PNLV.

It belongs to the complex I subunit 4 family.

The protein localises to the plastid. The protein resides in the chloroplast thylakoid membrane. It catalyses the reaction a plastoquinone + NADH + (n+1) H(+)(in) = a plastoquinol + NAD(+) + n H(+)(out). It carries out the reaction a plastoquinone + NADPH + (n+1) H(+)(in) = a plastoquinol + NADP(+) + n H(+)(out). This is NAD(P)H-quinone oxidoreductase chain 4, chloroplastic from Psilotum nudum (Whisk fern).